The sequence spans 209 residues: Large ribosomal subunit protein uL3 (209 aa).

N5-methylglutamine is present on Gln-150.

Belongs to the universal ribosomal protein uL3 family. In terms of assembly, part of the 50S ribosomal subunit. Forms a cluster with proteins L14 and L19. In terms of processing, methylated by PrmB.

In terms of biological role, one of the primary rRNA binding proteins, it binds directly near the 3'-end of the 23S rRNA, where it nucleates assembly of the 50S subunit. This chain is Large ribosomal subunit protein uL3, found in Aliivibrio fischeri (strain MJ11) (Vibrio fischeri).